We begin with the raw amino-acid sequence, 591 residues long: PE-PGRS family protein PE_PGRS5 (591 aa).

In terms of domain architecture, PE spans 1–93; it reads MSFVIAQPEM…AGAYASAEAA (93 aa). The segment at 94 to 591 is PGRS; the sequence is NAGPNMLAAV…GGKGNNGNPG (498 aa). Composition is skewed to gly residues over residues 303 to 324, 336 to 363, 371 to 412, 477 to 491, 539 to 567, and 579 to 591; these read GAGG…GNGG, ASGG…GHVS, GAGG…GDGG, SEAG…GGDG, AGTG…GVNG, and GATG…GNPG. Disordered regions lie at residues 303-412, 468-491, and 539-591; these read GAGG…GDGG, GSVN…GGDG, and AGTG…GNPG.

Belongs to the mycobacterial PE family. PGRS subfamily. In terms of assembly, interacts with human TLR4.

It localises to the host endoplasmic reticulum. Involved in endoplasmic reticulum (ER) stress-mediated apoptosis through human Toll-like receptor 4 (TLR4) signaling pathway. Localizes to the host ER, leading to ER stress, disruption of intracellular Ca(2+) homeostasis and increase of nitric oxide (NO) and reactive oxygen species (ROS) levels. Stress response results in caspase-8 activation and apoptosis of macrophage cells. Apoptosis may lead to dissemination of the bacteria, thereby spreading the disease. The sequence is that of PE-PGRS family protein PE_PGRS5 from Mycobacterium tuberculosis (strain ATCC 25618 / H37Rv).